Reading from the N-terminus, the 445-residue chain is Zinc finger protein 296 (445 aa).

Residues 1 to 10 (MSRRKAGRVP) show a composition bias toward basic residues. The disordered stretch occupies residues 1-20 (MSRRKAGRVPRRVDPDTDTD). Lysine 31 participates in a covalent cross-link: Glycyl lysine isopeptide (Lys-Gly) (interchain with G-Cter in SUMO2). The interval 62 to 88 (SRPLGAPSTCAPRMPLSSKSSDRQPWT) is disordered. 3 C2H2-type zinc fingers span residues 138 to 161 (LSCLQCGRQYTSPWKLLCHAQWDH), 212 to 234 (PTCDVCKKTLSSFSNLKVHMRSH), and 240 to 262 (YSCDQCSYACAQSSKLNRHKKTH). Residues 256–359 (NRHKKTHRQL…TAPRKSHGPG (104 aa)) form a disordered region. Residues 269 to 278 (SPSTSASSRG) are compositionally biased toward polar residues. Residues 320-332 (PGSGAQGGPGFVG) are compositionally biased toward gly residues. Over residues 338–351 (KVERTDPVKIEKTA) the composition is skewed to basic and acidic residues. 3 C2H2-type zinc fingers span residues 360–382 (GKCEFCGKSFTNSSNLTVHRRSH), 388–410 (YTCDQCPYACAQSSKLNRHRRTH), and 418–441 (VKCPHCLVPFGLQATLDKHLRQKH).

It belongs to the krueppel C2H2-type zinc-finger protein family. Interacts with KLF4. In terms of tissue distribution, strongly expressed in testis and embryonic stem cells.

It is found in the nucleus. Its function is as follows. May be a transcriptional corepressor with KLF4. The polypeptide is Zinc finger protein 296 (Mus musculus (Mouse)).